A 268-amino-acid chain; its full sequence is Secreted RxLR effector protein 5 (268 aa).

The N-terminal stretch at 1 to 21 (MRGAFYMAITLFLARSRSATA) is a signal peptide. A RxLR-dEER motif is present at residues 48 to 63 (RYLRDGLALSAANEER). The N-linked (GlcNAc...) asparagine glycan is linked to asparagine 104.

The protein belongs to the RxLR effector family.

Its subcellular location is the secreted. The protein resides in the host nucleus. Effector that acts as a broad suppressor of cell death to interrupt plant immunity. Inhibits cell death induced by cell death-inducing proteins, including the PAMP elicitor INF1 from P.infestans. The sequence is that of Secreted RxLR effector protein 5 from Plasmopara viticola (Downy mildew of grapevine).